A 171-amino-acid polypeptide reads, in one-letter code: Dual-action ribosomal maturation protein DarP (171 aa).

The segment at 1–30 (MPKRPAENPEQSDDFVSKSQKKREMAERQE) is disordered.

It belongs to the DarP family.

It is found in the cytoplasm. Member of a network of 50S ribosomal subunit biogenesis factors which assembles along the 30S-50S interface, preventing incorrect 23S rRNA structures from forming. Promotes peptidyl transferase center (PTC) maturation. This Idiomarina loihiensis (strain ATCC BAA-735 / DSM 15497 / L2-TR) protein is Dual-action ribosomal maturation protein DarP.